We begin with the raw amino-acid sequence, 195 residues long: Glycerol-3-phosphate acyltransferase (195 aa).

The next 5 membrane-spanning stretches (helical) occupy residues 3-23 (FQVV…GFIL), 52-72 (LALL…AIAQ), 80-100 (ILFL…YLFF), 113-133 (LIFI…ICFL), and 147-167 (LIAL…IFAI).

The protein belongs to the PlsY family. In terms of assembly, probably interacts with PlsX.

The protein resides in the cell inner membrane. The enzyme catalyses an acyl phosphate + sn-glycerol 3-phosphate = a 1-acyl-sn-glycero-3-phosphate + phosphate. It participates in lipid metabolism; phospholipid metabolism. Catalyzes the transfer of an acyl group from acyl-phosphate (acyl-PO(4)) to glycerol-3-phosphate (G3P) to form lysophosphatidic acid (LPA). This enzyme utilizes acyl-phosphate as fatty acyl donor, but not acyl-CoA or acyl-ACP. The protein is Glycerol-3-phosphate acyltransferase of Ehrlichia ruminantium (strain Gardel).